The following is a 356-amino-acid chain: Heparan sulfate 2-O-sulfotransferase 1 (356 aa).

Residues 1–11 are Cytoplasmic-facing; sequence MGLLRIMMPPK. The chain crosses the membrane as a helical; Signal-anchor for type II membrane protein span at residues 12-28; sequence LQLLAVVAFAVAMLFLE. A coiled-coil region spans residues 24-51; the sequence is MLFLENQIQKLEESRSKLERAIARHEVR. Topologically, residues 29-356 are lumenal; that stretch reads NQIQKLEESR…FYEKIYPKSN (328 aa). The adenosine 3',5'-bisphosphate site is built by Lys83, Thr84, Ala85, Ser86, Thr87, and Ser88. N-linked (GlcNAc...) asparagine glycosylation is found at Asn108 and Asn127. Catalysis depends on residues His140 and His142. Residues Arg164 and Ser172 each contribute to the adenosine 3',5'-bisphosphate site. 2 disulfide bridges follow: Cys201–Cys209 and Cys222–Cys228. Adenosine 3',5'-bisphosphate-binding residues include Tyr279, Ser285, Thr290, and Lys293.

It belongs to the sulfotransferase 3 family. Homotrimer. Interacts with the C5-epimerase GLCE. In terms of processing, N-glycosylated.

Its subcellular location is the golgi apparatus membrane. In terms of biological role, catalyzes the transfer of a sulfo group from 3'-phospho-5'-adenylyl sulfate (PAPS) to the 2-OH position of iduronic acid (IdoA) or glucuronic acid (GlcA) within the heparan sulfate (HS) chain and participates in HS biosynthesis. Required for metanephric development of kidney formation, suggesting that 2-O-sulfation within HS is essential for signaling between ureteric bud and metanephric mesenchyme. The protein is Heparan sulfate 2-O-sulfotransferase 1 of Homo sapiens (Human).